Here is a 341-residue protein sequence, read N- to C-terminus: Glycerol-3-phosphate dehydrogenase [NAD(P)+] (341 aa).

Residues S13, W14, and K108 each contribute to the NADPH site. 3 residues coordinate sn-glycerol 3-phosphate: K108, G139, and S141. NADPH is bound at residue A143. K194, D247, S257, R258, and N259 together coordinate sn-glycerol 3-phosphate. K194 functions as the Proton acceptor in the catalytic mechanism. R258 contributes to the NADPH binding site. V282 and E284 together coordinate NADPH.

The protein belongs to the NAD-dependent glycerol-3-phosphate dehydrogenase family.

It localises to the cytoplasm. It carries out the reaction sn-glycerol 3-phosphate + NAD(+) = dihydroxyacetone phosphate + NADH + H(+). The catalysed reaction is sn-glycerol 3-phosphate + NADP(+) = dihydroxyacetone phosphate + NADPH + H(+). It functions in the pathway membrane lipid metabolism; glycerophospholipid metabolism. In terms of biological role, catalyzes the reduction of the glycolytic intermediate dihydroxyacetone phosphate (DHAP) to sn-glycerol 3-phosphate (G3P), the key precursor for phospholipid synthesis. This Lactococcus lactis subsp. lactis (strain IL1403) (Streptococcus lactis) protein is Glycerol-3-phosphate dehydrogenase [NAD(P)+].